The primary structure comprises 231 residues: Protein N-terminal glutamine amidohydrolase (231 aa).

The segment at 1–21 (MADDRVAGGATPPPPPPPPPL) is disordered. Residues 11 to 21 (TPPPPPPPPPL) are compositionally biased toward pro residues. Residues C33, H89, and D108 contribute to the active site.

It belongs to the NTAQ1 family. In terms of assembly, monomer.

It carries out the reaction N-terminal L-glutaminyl-[protein] + H2O = N-terminal L-glutamyl-[protein] + NH4(+). Mediates the side-chain deamidation of N-terminal glutamine residues to glutamate, an important step in N-end rule pathway of protein degradation. Conversion of the resulting N-terminal glutamine to glutamate renders the protein susceptible to arginylation, polyubiquitination and degradation as specified by the N-end rule. Does not act on substrates with internal or C-terminal glutamine and does not act on non-glutamine residues in any position. In Oryza sativa subsp. indica (Rice), this protein is Protein N-terminal glutamine amidohydrolase.